The following is a 222-amino-acid chain: Proteoglycan 3 (222 aa).

The N-terminal stretch at 1 to 17 is a signal peptide; the sequence is MKQPLILSFLLLGMVSA. Positions 27-46 are enriched in basic and acidic residues; that stretch reads NPKREESLKQEADGSREQGR. The tract at residues 27 to 100 is disordered; that stretch reads NPKREESLKQ…PKEEDTTHFQ (74 aa). Positions 71–81 are enriched in acidic residues; sequence FEDEEAMESDP. Basic and acidic residues predominate over residues 83 to 97; the sequence is ALNKDSACPKEEDTT. One can recognise a C-type lectin domain in the interval 105–221; it reads CKSCNYVLVR…CKSHLPFICS (117 aa). 2 disulfide bridges follow: Cys126–Cys220 and Cys197–Cys212.

Expressed in bone marrow, spleen, and thymus. Not detected in heart, liver or lung.

In terms of biological role, possesses similar cytotoxic and cytostimulatory activities to PRG2/MBP. In Mus musculus (Mouse), this protein is Proteoglycan 3.